The primary structure comprises 802 residues: Putative transcriptional regulator cudA (802 aa).

Disordered regions lie at residues 1–148, 154–173, 381–446, and 636–658; these read MNQS…PSAI, ISNN…NLLL, NNIN…NNEN, and QPQQ…QQGQ. Residues 25–63 show a composition bias toward low complexity; sequence NNNNNGNNGMMMNQQQMQQHVVPHLHHLQQQQQQPQQQQ. Residues 69-88 are compositionally biased toward polar residues; it reads DYSNSPNGTTNGSTMSPNCI. Over residues 89-128 the composition is skewed to low complexity; sequence NTNNNNNNNNNNNNNSNNNNNNNNNASNNLTSNKSSSTNT. Polar residues predominate over residues 129–142; the sequence is PQIGQLQASPANLT. Residues 381-445 are compositionally biased toward low complexity; that stretch reads NNINNNNNIN…CNNNNNNNNE (65 aa).

In terms of tissue distribution, expressed in the prestalk cells that constitute the slug tip (pstA cells) and in prespore cells (at protein level). Not expressed in the band of prestalk cells that lies behind the slug tip (pstO cells). Highly expressed in pstO derived papilla cells during culmination.

It localises to the nucleus. Its subcellular location is the nucleoplasm. In terms of biological role, essential for normal culmination. May function as a transcriptional regulator. This is Putative transcriptional regulator cudA (cudA) from Dictyostelium discoideum (Social amoeba).